Here is a 274-residue protein sequence, read N- to C-terminus: Large ribosomal subunit protein uL2cz/uL2cy (274 aa).

2 disordered regions span residues 1–23 (MAIH…SKVK) and 224–274 (NPVD…RRSK).

Belongs to the universal ribosomal protein uL2 family. As to quaternary structure, part of the 50S ribosomal subunit.

The protein localises to the plastid. It localises to the chloroplast. In Lactuca sativa (Garden lettuce), this protein is Large ribosomal subunit protein uL2cz/uL2cy (rpl2-A).